Reading from the N-terminus, the 209-residue chain is Uracil phosphoribosyltransferase (209 aa).

5-phospho-alpha-D-ribose 1-diphosphate-binding positions include Arg79, Arg104, and 131 to 139 (DPMLATGGS). Uracil contacts are provided by residues Ile194 and 199–201 (GDA). 5-phospho-alpha-D-ribose 1-diphosphate is bound at residue Asp200.

The protein belongs to the UPRTase family. Mg(2+) serves as cofactor.

The enzyme catalyses UMP + diphosphate = 5-phospho-alpha-D-ribose 1-diphosphate + uracil. The protein operates within pyrimidine metabolism; UMP biosynthesis via salvage pathway; UMP from uracil: step 1/1. With respect to regulation, allosterically activated by GTP. Its function is as follows. Catalyzes the conversion of uracil and 5-phospho-alpha-D-ribose 1-diphosphate (PRPP) to UMP and diphosphate. The sequence is that of Uracil phosphoribosyltransferase from Lactiplantibacillus plantarum (strain ATCC BAA-793 / NCIMB 8826 / WCFS1) (Lactobacillus plantarum).